We begin with the raw amino-acid sequence, 875 residues long: Neurotrypsin (875 aa).

A signal peptide spans 1-20 (MTLARFVLALMLGALPEVVG). Asn26 carries an N-linked (GlcNAc...) asparagine glycan. The segment at 29 to 88 (LHHSHRHSPPAGPHYPYYLPTQQRPPRTRPPPPLPRFPRPPRALPAQRPHALQAGHTPRP) is disordered. Pro residues predominate over residues 56-71 (TRPPPPLPRFPRPPRA). A Kringle domain is found at 93–165 (CPAGEPWVSV…GKVDWGYCDC (73 aa)). Disulfide bonds link Cys93–Cys165, Cys109–Cys149, Cys138–Cys163, Cys195–Cys259, Cys208–Cys269, Cys239–Cys249, Cys305–Cys369, Cys318–Cys379, Cys349–Cys359, Cys412–Cys475, Cys425–Cys485, Cys455–Cys465, Cys525–Cys589, Cys538–Cys599, Cys569–Cys579, Cys619–Cys750, Cys661–Cys677, Cys765–Cys831, Cys794–Cys808, and Cys821–Cys850. 4 consecutive SRCR domains span residues 170–271 (VRLR…TCSF), 280–381 (IRLA…SCTP), 387–487 (IRLA…ACYP), and 500–601 (VRLM…ICDY). Residues 619-630 (CGLRLLHRRQKR) are zymogen activation region. Positions 631 to 874 (IIGGKNSLRG…FVPWIKSVTK (244 aa)) constitute a Peptidase S1 domain. The active-site Charge relay system is His676. N-linked (GlcNAc...) asparagine glycosylation occurs at Asn683. Asp726 acts as the Charge relay system in catalysis. The active-site Charge relay system is the Ser825.

Belongs to the peptidase S1 family. As to expression, brain and Leydig cells of the testis.

It is found in the secreted. Functionally, plays a role in neuronal plasticity and the proteolytic action may subserve structural reorganizations associated with learning and memory operations. The sequence is that of Neurotrypsin (PRSS12) from Homo sapiens (Human).